Reading from the N-terminus, the 296-residue chain is Cholesterol ring-cleaving hydrolase IpdA subunit (296 aa).

It belongs to the 3-oxoacid CoA-transferase subunit A family. Heterotetramer composed of 2 IpdA subunits and 2 IpdB subunits.

The catalysed reaction is (3E)-2-(2-carboxylatoethyl)-3-methyl-6-oxocyclohex-1-ene-1-carboxyl-CoA + H2O = 6-methyl-3,7-dioxodecanedioyl-CoA. The protein operates within steroid metabolism; cholesterol degradation. Functionally, involved in the final steps of cholesterol and steroid degradation. Opens the last steroid ring of cholesterol by catalyzing the hydrolysis of (3E)-2-(2-carboxylatoethyl)-3-methyl-6-oxocyclohex-1-ene-1-carboxyl-CoA (COCHEA-CoA) to 6-methyl-3,7-dioxodecanedioyl-CoA (MeDODA-CoA). This chain is Cholesterol ring-cleaving hydrolase IpdA subunit, found in Rhodococcus jostii (strain RHA1).